The primary structure comprises 298 residues: Ribosomal RNA small subunit methyltransferase H (298 aa).

S-adenosyl-L-methionine is bound by residues 46-48 (GGH), D65, F92, D108, and H115.

Belongs to the methyltransferase superfamily. RsmH family.

Its subcellular location is the cytoplasm. It catalyses the reaction cytidine(1402) in 16S rRNA + S-adenosyl-L-methionine = N(4)-methylcytidine(1402) in 16S rRNA + S-adenosyl-L-homocysteine + H(+). Specifically methylates the N4 position of cytidine in position 1402 (C1402) of 16S rRNA. The sequence is that of Ribosomal RNA small subunit methyltransferase H from Nostoc punctiforme (strain ATCC 29133 / PCC 73102).